We begin with the raw amino-acid sequence, 188 residues long: Elongation factor P (188 aa).

Lysine 34 bears the N6-(3,6-diaminohexanoyl)-5-hydroxylysine mark.

It belongs to the elongation factor P family. In terms of processing, may be beta-lysylated on the epsilon-amino group of Lys-34 by the combined action of EpmA and EpmB, and then hydroxylated on the C5 position of the same residue by EpmC (if this protein is present). Lysylation is critical for the stimulatory effect of EF-P on peptide-bond formation. The lysylation moiety may extend toward the peptidyltransferase center and stabilize the terminal 3-CCA end of the tRNA. Hydroxylation of the C5 position on Lys-34 may allow additional potential stabilizing hydrogen-bond interactions with the P-tRNA.

Its subcellular location is the cytoplasm. It participates in protein biosynthesis; polypeptide chain elongation. In terms of biological role, involved in peptide bond synthesis. Alleviates ribosome stalling that occurs when 3 or more consecutive Pro residues or the sequence PPG is present in a protein, possibly by augmenting the peptidyl transferase activity of the ribosome. Modification of Lys-34 is required for alleviation. The polypeptide is Elongation factor P (Xanthomonas axonopodis pv. citri (strain 306)).